The sequence spans 330 residues: Ferredoxin--NADP reductase (330 aa).

Positions 19, 38, 46, 51, 91, 129, 286, and 327 each coordinate FAD.

Belongs to the ferredoxin--NADP reductase type 2 family. Homodimer. FAD is required as a cofactor.

It catalyses the reaction 2 reduced [2Fe-2S]-[ferredoxin] + NADP(+) + H(+) = 2 oxidized [2Fe-2S]-[ferredoxin] + NADPH. The protein is Ferredoxin--NADP reductase of Nocardioides sp. (strain ATCC BAA-499 / JS614).